The sequence spans 357 residues: Spore wall and anchoring disk complex protein EnP1 (357 aa).

Residues 1-16 form the signal peptide; sequence MKLLGFLIVGLSAISA. The N-linked (GlcNAc...) asparagine glycan is linked to Asn-47. The HBM1 signature appears at 150-158; sequence ERRPHYKKI. The HBM2 signature appears at 329 to 334; it reads LKKVRG.

It localises to the spore wall. Its subcellular location is the spore. It is found in the perispore. In terms of biological role, spore wall protein involved in the adhesion to host cells surface glycoaminoglycans (GAGs). Microsporidian spore adherence is an integral part of activation and host cell invasion which requires the extrusion at the spore apex of a very long and coiled structure, the polar tube, through which the sporoplasm is pushed to enter into the potential host cell. The chain is Spore wall and anchoring disk complex protein EnP1 (EnP1) from Encephalitozoon cuniculi (strain GB-M1) (Microsporidian parasite).